Consider the following 216-residue polypeptide: Cytochrome c-type protein Cgr1 (216 aa).

Residues 18–38 (WPIVVGVVVVVLIAAGAGFWV) form a helical membrane-spanning segment. Heme is bound by residues Cys46, Cys50, His51, Cys95, Cys98, His99, Cys142, Cys147, His148, Cys176, Cys179, His180, Cys190, Cys193, and His194.

It belongs to the multiheme cytochrome c family. In terms of assembly, may form a membrane-associated complex with Cgr2. Post-translationally, binds 5 heme groups per subunit.

The protein localises to the cell membrane. Functionally, probably transfers electrons from a membrane-associated electron donor (e.g. the membrane quinone pool) to the [4Fe-4S] cluster of the Cgr2 reductase via its covalently bound heme groups. The sequence is that of Cytochrome c-type protein Cgr1 from Eggerthella lenta (strain ATCC 25559 / DSM 2243 / CCUG 17323 / JCM 9979 / KCTC 3265 / NCTC 11813 / VPI 0255 / 1899 B) (Eubacterium lentum).